Here is a 621-residue protein sequence, read N- to C-terminus: MSCYIYQLPSWVLDDLCRNMDTLSEWDWMQFASYVITDLTQLRKIKSMERAQGVSITRELLWWWGMRQATVQQLLDLLCHLELYRAAQIILNWKPVLEVKSSIPDFSDTVKPGKPLAASVRNTEDKQETGQPVRPPTFPGSGPAAVRVNLPAPPEDASSSLKTNQTASADSKDFSASIPKQETLSSLAGDDLFWSEVDVIQATDNFNPSHKISEGTFADVYRGHKRGTPFIFKKLREMACSGPGSVEKFFQAEVQICRRCCHPNVLPLLGCCTGEQFYSLIYPYMANGSLQDRLQGQGGSDPLPWPQRISICSGLLHAVEHLHSLEIIHGNVKSSNVLLDQNFTPKLAHSMAHPCPVNRTSKYTMMKTHLFQASTAYLPEDFIRVGQLTKRVDIFSCGIVLAEVLTGIPAMDNNRNPVYLKDLLLHEIPSSTISLCSRKMGVEKEMAKEICQKYLEKRAGRLPEAHAEALVMAACLCLRRRNASLAEVCSSVAAVEEQLRGQETSLPCSGLSEGTGSSFNTPEETDDVDNSSFDGSYSMRAAPWAGATSSPPLTADEEGMLLAGGAVEADSSAEACAPPEPPQDATETSWKIEINEAKRKLMENILLYKEEKLDSIELFGP.

One can recognise a Death domain in the interval 13–94 (LDDLCRNMDT…RAAQIILNWK (82 aa)). The disordered stretch occupies residues 113–175 (GKPLAASVRN…TASADSKDFS (63 aa)). The segment covering 157–169 (ASSSLKTNQTASA) has biased composition (polar residues). Residues 206–476 (FNPSHKISEG…AEALVMAACL (271 aa)) form the Protein kinase domain. Residues 212-220 (ISEGTFADV), Lys233, and 333-336 (KSSN) each bind ATP. Residues 503-522 (ETSLPCSGLSEGTGSSFNTP) show a composition bias toward polar residues. The segment at 503–534 (ETSLPCSGLSEGTGSSFNTPEETDDVDNSSFD) is disordered.

Belongs to the protein kinase superfamily. TKL Ser/Thr protein kinase family. Pelle subfamily. Interacts with MYD88. IL-1 stimulation leads to the formation of a signaling complex which dissociates from the IL-1 receptor following the binding of PELI1.

In terms of biological role, binds to the IL-1 type I receptor following IL-1 engagement, triggering intracellular signaling cascades leading to transcriptional up-regulation and mRNA stabilization. This is Interleukin-1 receptor-associated kinase-like 2 (IRAK2) from Bos taurus (Bovine).